A 523-amino-acid chain; its full sequence is Tyrosine/DOPA decarboxylase 5 (523 aa).

Polar residues predominate over residues 1–19 (MGSLPTDNLESMSICSQNP). Disordered stretches follow at residues 1-20 (MGSL…QNPL) and 47-66 (SRSQ…APNH). Residue Lys-321 is modified to N6-(pyridoxal phosphate)lysine.

The protein belongs to the group II decarboxylase family. As to quaternary structure, homodimer. The cofactor is pyridoxal 5'-phosphate. Roots.

The enzyme catalyses L-tyrosine + H(+) = tyramine + CO2. The catalysed reaction is L-dopa + H(+) = dopamine + CO2. It carries out the reaction 5-hydroxy-L-tryptophan + H(+) = serotonin + CO2. Its function is as follows. May play an important role in providing precursors for alkaloid synthesis in the roots and germinating seedlings. This Papaver somniferum (Opium poppy) protein is Tyrosine/DOPA decarboxylase 5 (TYDC5).